A 405-amino-acid polypeptide reads, in one-letter code: Lipase lipl-1 (405 aa).

The signal sequence occupies residues M1–G20. N-linked (GlcNAc...) asparagine glycosylation occurs at N66. The active-site Nucleophile is the S169. N-linked (GlcNAc...) asparagine glycosylation occurs at N273. Catalysis depends on charge relay system residues D344 and H376.

This sequence belongs to the AB hydrolase superfamily. Lipase family.

It localises to the secreted. The protein resides in the lysosome lumen. In terms of biological role, lipase that, together with lipl-3, plays a role in the response to nutrient deprivation by controlling lipid metabolism. Specifically, involved in the breakdown of lipids during lipophagy, a process during which lipids contained in lipid droplets that have been delivered to lysosomes by autophagy are degraded. The protein is Lipase lipl-1 of Caenorhabditis elegans.